Here is a 179-residue protein sequence, read N- to C-terminus: Large ribosomal subunit protein uL5 (179 aa).

This sequence belongs to the universal ribosomal protein uL5 family. As to quaternary structure, part of the 50S ribosomal subunit; part of the 5S rRNA/L5/L18/L25 subcomplex. Contacts the 5S rRNA and the P site tRNA. Forms a bridge to the 30S subunit in the 70S ribosome.

In terms of biological role, this is one of the proteins that bind and probably mediate the attachment of the 5S RNA into the large ribosomal subunit, where it forms part of the central protuberance. In the 70S ribosome it contacts protein S13 of the 30S subunit (bridge B1b), connecting the 2 subunits; this bridge is implicated in subunit movement. Contacts the P site tRNA; the 5S rRNA and some of its associated proteins might help stabilize positioning of ribosome-bound tRNAs. This Trichlorobacter lovleyi (strain ATCC BAA-1151 / DSM 17278 / SZ) (Geobacter lovleyi) protein is Large ribosomal subunit protein uL5.